Reading from the N-terminus, the 365-residue chain is Tubulin-like protein CetZ (365 aa).

GTP is bound by residues 10–14, 103–105, Glu-136, Asn-163, and Asn-181; these read QCGGK and GTG.

This sequence belongs to the CetZ family.

It localises to the cytoplasm. In terms of biological role, involved in cell shape control. This Pyrococcus abyssi (strain GE5 / Orsay) protein is Tubulin-like protein CetZ.